The chain runs to 141 residues: ATP synthase epsilon chain (141 aa).

This sequence belongs to the ATPase epsilon chain family. In terms of assembly, F-type ATPases have 2 components, CF(1) - the catalytic core - and CF(0) - the membrane proton channel. CF(1) has five subunits: alpha(3), beta(3), gamma(1), delta(1), epsilon(1). CF(0) has three main subunits: a, b and c.

It is found in the cell inner membrane. Produces ATP from ADP in the presence of a proton gradient across the membrane. This is ATP synthase epsilon chain from Burkholderia thailandensis (strain ATCC 700388 / DSM 13276 / CCUG 48851 / CIP 106301 / E264).